The following is a 482-amino-acid chain: Chitobiosyldiphosphodolichol beta-mannosyltransferase (482 aa).

Over 1-2 (MA) the chain is Lumenal. Residues 3 to 23 (ASCVALLVLALLLLVLLLGLW) form a helical membrane-spanning segment. Topologically, residues 24-99 (KRGRQTGRAR…DLRGLGAGPR (76 aa)) are cytoplasmic. Positions 100 to 120 (ILQYGVKVVFQAVYLLWKMMR) form an intramembrane region, helical. The Cytoplasmic portion of the chain corresponds to 121–482 (MDPAAYIFLQ…PCGHPSCRGF (362 aa)). The residue at position 242 (serine 242) is a Phosphoserine.

Belongs to the glycosyltransferase group 1 family. Glycosyltransferase 33 subfamily.

Its subcellular location is the endoplasmic reticulum membrane. It carries out the reaction an N,N'-diacetylchitobiosyl-diphospho-di-trans,poly-cis-dolichol + GDP-alpha-D-mannose = a beta-D-Man-(1-&gt;4)-beta-D-GlcNAc-(1-&gt;4)-alpha-D-GlcNAc-diphospho-di-trans,poly-cis-dolichol + GDP + H(+). Its pathway is protein modification; protein glycosylation. Its function is as follows. Mannosyltransferase that operates in the biosynthetic pathway of dolichol-linked oligosaccharides, the glycan precursors employed in protein asparagine (N)-glycosylation. The assembly of dolichol-linked oligosaccharides begins on the cytosolic side of the endoplasmic reticulum membrane and finishes in its lumen. The sequential addition of sugars to dolichol pyrophosphate produces dolichol-linked oligosaccharides containing fourteen sugars, including two GlcNAcs, nine mannoses and three glucoses. Once assembled, the oligosaccharide is transferred from the lipid to nascent proteins by oligosaccharyltransferases. Catalyzes, on the cytoplasmic face of the endoplasmic reticulum, the addition of the first mannose residues to the dolichol-linked oligosaccharide chain, to produce Man1GlcNAc(2)-PP-dolichol core oligosaccharide. Man1GlcNAc(2)-PP-dolichol is a substrate for ALG2, the following enzyme in the biosynthetic pathway. The polypeptide is Chitobiosyldiphosphodolichol beta-mannosyltransferase (Mus musculus (Mouse)).